The primary structure comprises 1388 residues: Kinesin-like protein KIF15 (1388 aa).

The disordered stretch occupies residues 1 to 25; that stretch reads MAPGCKTELRSVTNGQSNQPSNEGD. Polar residues predominate over residues 10–22; the sequence is RSVTNGQSNQPSN. Residues 26-363 enclose the Kinesin motor domain; that stretch reads AIKVFVRIRP…LNFAQRAKLI (338 aa). An ATP-binding site is contributed by 109–116; it reads GQTGSGKT. Positions 368–1388 form a coiled coil; that stretch reads VVNEDTQGNV…FLKEKKRSES (1021 aa). The residue at position 399 (threonine 399) is a Phosphothreonine. Serine 568 carries the post-translational modification Phosphoserine. Lysine 1009 is modified (N6-acetyllysine). Phosphoserine occurs at positions 1141 and 1169. The disordered stretch occupies residues 1228-1250; that stretch reads QKENSDQNHPDNQQLKNEQEESI.

The protein belongs to the TRAFAC class myosin-kinesin ATPase superfamily. Kinesin family. KLP2 subfamily. As to quaternary structure, interacts with MKI67 and TPX2. In terms of tissue distribution, expressed in testis, colon, thymus and in breast cancer.

The protein localises to the cytoplasm. It localises to the cytoskeleton. Its subcellular location is the spindle. Plus-end directed kinesin-like motor enzyme involved in mitotic spindle assembly. The protein is Kinesin-like protein KIF15 (KIF15) of Homo sapiens (Human).